A 405-amino-acid chain; its full sequence is Tryptophan synthase beta chain (405 aa).

Lysine 98 bears the N6-(pyridoxal phosphate)lysine mark.

This sequence belongs to the TrpB family. Tetramer of two alpha and two beta chains. It depends on pyridoxal 5'-phosphate as a cofactor.

The catalysed reaction is (1S,2R)-1-C-(indol-3-yl)glycerol 3-phosphate + L-serine = D-glyceraldehyde 3-phosphate + L-tryptophan + H2O. It functions in the pathway amino-acid biosynthesis; L-tryptophan biosynthesis; L-tryptophan from chorismate: step 5/5. The beta subunit is responsible for the synthesis of L-tryptophan from indole and L-serine. The chain is Tryptophan synthase beta chain from Parvibaculum lavamentivorans (strain DS-1 / DSM 13023 / NCIMB 13966).